The sequence spans 79 residues: Large ribosomal subunit protein bL28 (79 aa).

The protein belongs to the bacterial ribosomal protein bL28 family.

The protein is Large ribosomal subunit protein bL28 of Porphyromonas gingivalis (strain ATCC 33277 / DSM 20709 / CIP 103683 / JCM 12257 / NCTC 11834 / 2561).